A 339-amino-acid chain; its full sequence is Ferrochelatase (339 aa).

His-202 and Glu-283 together coordinate Fe cation.

Belongs to the ferrochelatase family.

It is found in the cytoplasm. The enzyme catalyses heme b + 2 H(+) = protoporphyrin IX + Fe(2+). It participates in porphyrin-containing compound metabolism; protoheme biosynthesis; protoheme from protoporphyrin-IX: step 1/1. Catalyzes the ferrous insertion into protoporphyrin IX. The chain is Ferrochelatase from Psychrobacter cryohalolentis (strain ATCC BAA-1226 / DSM 17306 / VKM B-2378 / K5).